The following is a 141-amino-acid chain: uncharacterized protein (141 aa).

2 consecutive transmembrane segments (helical) span residues 20–42 (FLVN…FCLA) and 52–74 (LHLC…IFTL).

It is found in the cell membrane. This is an uncharacterized protein from Archaeoglobus fulgidus (strain ATCC 49558 / DSM 4304 / JCM 9628 / NBRC 100126 / VC-16).